A 326-amino-acid chain; its full sequence is MPPYISAFQAAYIGIEVLIALVSVPGNVLVIWAVKVNQALRDATFCFIVSLAVADVAVGALVIPLAILINIGPQTYFHTCLMVACPVLILTQSSILALLAIAVDRYLRVKIPLRYKTVVTQRRAAVAIAGCWILSLVVGLTPMFGWNNLSEVEQAWIANGSVGEPVIKCEFEKVISMEYMVYFNFFVWVLPPLLLMVLIYLEVFYLIRKQLNKKVSASSGDPQKYYGKELKIAKSLALILFLFALSWLPLHILNCITLFCPTCQKPSILIYIAIFLTHGNSAMNPIVYAFRIHKFRVTFLKIWNDHFRCQPKPPIEEDIPEEKADD.

Topologically, residues 1–10 (MPPYISAFQA) are extracellular. A helical transmembrane segment spans residues 11–33 (AYIGIEVLIALVSVPGNVLVIWA). Topologically, residues 34–46 (VKVNQALRDATFC) are cytoplasmic. A helical transmembrane segment spans residues 47 to 69 (FIVSLAVADVAVGALVIPLAILI). The Extracellular segment spans residues 70–80 (NIGPQTYFHTC). A disulfide bridge connects residues Cys80 and Cys169. The chain crosses the membrane as a helical span at residues 81-102 (LMVACPVLILTQSSILALLAIA). Residues 103-123 (VDRYLRVKIPLRYKTVVTQRR) lie on the Cytoplasmic side of the membrane. The helical transmembrane segment at 124–146 (AAVAIAGCWILSLVVGLTPMFGW) threads the bilayer. The Extracellular segment spans residues 147 to 176 (NNLSEVEQAWIANGSVGEPVIKCEFEKVIS). 2 N-linked (GlcNAc...) asparagine glycosylation sites follow: Asn148 and Asn159. Residues 177–201 (MEYMVYFNFFVWVLPPLLLMVLIYL) form a helical membrane-spanning segment. Topologically, residues 202–235 (EVFYLIRKQLNKKVSASSGDPQKYYGKELKIAKS) are cytoplasmic. A helical membrane pass occupies residues 236 to 259 (LALILFLFALSWLPLHILNCITLF). Topologically, residues 260–267 (CPTCQKPS) are extracellular. The helical transmembrane segment at 268-292 (ILIYIAIFLTHGNSAMNPIVYAFRI) threads the bilayer. Topologically, residues 293–326 (HKFRVTFLKIWNDHFRCQPKPPIEEDIPEEKADD) are cytoplasmic. The S-palmitoyl cysteine moiety is linked to residue Cys309.

The protein belongs to the G-protein coupled receptor 1 family.

The protein localises to the cell membrane. Receptor for adenosine. The activity of this receptor is mediated by G proteins which inhibit adenylyl cyclase. This is Adenosine receptor A1 (Adora1) from Mus musculus (Mouse).